Consider the following 205-residue polypeptide: Ribosomal RNA small subunit methyltransferase G (205 aa).

S-adenosyl-L-methionine is bound by residues G66, F71, I119–E120, and R135.

This sequence belongs to the methyltransferase superfamily. RNA methyltransferase RsmG family.

It localises to the cytoplasm. The catalysed reaction is guanosine(527) in 16S rRNA + S-adenosyl-L-methionine = N(7)-methylguanosine(527) in 16S rRNA + S-adenosyl-L-homocysteine. Specifically methylates the N7 position of guanine in position 527 of 16S rRNA. In Rhizobium johnstonii (strain DSM 114642 / LMG 32736 / 3841) (Rhizobium leguminosarum bv. viciae), this protein is Ribosomal RNA small subunit methyltransferase G.